Consider the following 321-residue polypeptide: Phosphatidate cytidylyltransferase, mitochondrial (321 aa).

The protein belongs to the TAM41 family. Mg(2+) serves as cofactor. Requires Co(2+) as cofactor. The cofactor is Cu(2+).

The protein localises to the mitochondrion inner membrane. The enzyme catalyses a 1,2-diacyl-sn-glycero-3-phosphate + CTP + H(+) = a CDP-1,2-diacyl-sn-glycerol + diphosphate. Its pathway is phospholipid metabolism; CDP-diacylglycerol biosynthesis; CDP-diacylglycerol from sn-glycerol 3-phosphate: step 3/3. Functionally, catalyzes the formation of CDP-diacylglycerol (CDP-DAG) from phosphatidic acid (PA) in the mitochondrial inner membrane. Required for the biosynthesis of the dimeric phospholipid cardiolipin, which stabilizes supercomplexes of the mitochondrial respiratory chain in the mitochondrial inner membrane. The chain is Phosphatidate cytidylyltransferase, mitochondrial from Caenorhabditis elegans.